A 384-amino-acid chain; its full sequence is Stress response protein bis1 (384 aa).

Disordered regions lie at residues Met1 to Gln22 and Ser344 to Val384.

It belongs to the ESS2 family. In terms of assembly, heterodimer with ish1.

The protein localises to the nucleus. The protein resides in the cytoplasm. It localises to the cytoskeleton. It is found in the spindle. Functionally, has a role in maintaining cell viability during stationary phase induced by stress response. May be involved in pre-mRNA splicing. The protein is Stress response protein bis1 (bis1) of Schizosaccharomyces pombe (strain 972 / ATCC 24843) (Fission yeast).